The sequence spans 452 residues: Sesamin methylene transferase (452 aa).

This sequence belongs to the GcvT family. As to quaternary structure, homotrimer.

The enzyme catalyses (+)-sesamin + (6S)-5,6,7,8-tetrahydrofolyl-(gamma-L-Glu)(n) = (+)-sesamin monocatechol + (6R)-5,10-methylenetetrahydrofolyl-(gamma-L-Glu)(n). It carries out the reaction (+)-sesamin monocatechol + (6S)-5,6,7,8-tetrahydrofolyl-(gamma-L-Glu)(n) = (+)-sesamin dicatechol + (6R)-5,10-methylenetetrahydrofolyl-(gamma-L-Glu)(n). Its function is as follows. Converts sesamin into sesamin mono- and di-catechol. Catalyzes a ring cleavage to transfer the methylene group to tetrahydrofolate (THF). Also active with (+)-episesamin, (-)-asarinin, sesaminol, (+)-sesamolin and piperine. The sequence is that of Sesamin methylene transferase from Sinomonas sp. (strain No.22).